The chain runs to 618 residues: Leucine aminopeptidase 2 (618 aa).

A peptide-binding positions include 139–141 (QCQ) and 271–276 (PYGGME). His300 is a Zn(2+) binding site. Catalysis depends on Glu301, which acts as the Proton acceptor. His304 and Glu323 together coordinate Zn(2+). The Proton donor role is filled by Tyr389.

Belongs to the peptidase M1 family. Requires Zn(2+) as cofactor.

The protein localises to the cytoplasm. Its subcellular location is the nucleus. It carries out the reaction an epoxide + H2O = an ethanediol. Functionally, aminopeptidase that preferentially cleaves di- and tripeptides. Also has low epoxide hydrolase activity (in vitro). Can hydrolyze the epoxide leukotriene LTA(4) but it forms preferentially 5,6-dihydroxy-7,9,11,14-eicosatetraenoic acid rather than the cytokine leukotriene B(4) as the product compared to the homologous mammalian enzyme (in vitro). The sequence is that of Leucine aminopeptidase 2 from Aspergillus clavatus (strain ATCC 1007 / CBS 513.65 / DSM 816 / NCTC 3887 / NRRL 1 / QM 1276 / 107).